A 246-amino-acid chain; its full sequence is 3-deoxy-manno-octulosonate cytidylyltransferase (246 aa).

This sequence belongs to the KdsB family.

Its subcellular location is the cytoplasm. It carries out the reaction 3-deoxy-alpha-D-manno-oct-2-ulosonate + CTP = CMP-3-deoxy-beta-D-manno-octulosonate + diphosphate. The protein operates within nucleotide-sugar biosynthesis; CMP-3-deoxy-D-manno-octulosonate biosynthesis; CMP-3-deoxy-D-manno-octulosonate from 3-deoxy-D-manno-octulosonate and CTP: step 1/1. It participates in bacterial outer membrane biogenesis; lipopolysaccharide biosynthesis. Activates KDO (a required 8-carbon sugar) for incorporation into bacterial lipopolysaccharide in Gram-negative bacteria. The sequence is that of 3-deoxy-manno-octulosonate cytidylyltransferase from Rickettsia peacockii (strain Rustic).